We begin with the raw amino-acid sequence, 132 residues long: Pro-MCH 2 (132 aa).

The N-terminal stretch at 1 to 24 (MRDSVLSVIFALALFLECYTPSMA) is a signal peptide. An intrachain disulfide couples Cys-120 to Cys-129.

The protein belongs to the melanin-concentrating hormone family. As to expression, pituitary gland. Produced in neurons of lateral basal hypothalamus which project both to the brain and to the neural lobe of the pituitary gland from where MCH is released.

Plays a role in skin pigmentation by antagonizing the action of melanotropin alpha. Induces melanin concentration within the melanophores. May participate in the control of the hypothalamo-pituitary adrenal gland axis by inhibiting the release of ACTH. The polypeptide is Pro-MCH 2 (mch2) (Oncorhynchus keta (Chum salmon)).